A 1377-amino-acid polypeptide reads, in one-letter code: Temperature-sensitive hemagglutinin tsh autotransporter (1377 aa).

Residues 1–52 (MNRIYSLRYSAVARGFIAVSEFARKCVHKSVRRLCFPVLLLIPVLFSAGSLA) form the signal peptide. One can recognise a Peptidase S6 domain in the interval 53–302 (GTVNNELGYQ…AVIPLDFIGQ (250 aa)). Catalysis depends on charge relay system residues H125, D153, and S259. Positions 1111 to 1377 (DINGEAGTWV…AINANIRYSF (267 aa)) constitute an Autotransporter domain.

In terms of processing, the C-terminus is blocked. Cleaved to release the mature protein from the outer membrane.

The protein localises to the periplasm. It localises to the secreted. Its subcellular location is the cell surface. It is found in the cell outer membrane. Its function is as follows. Contributes to the development of lesions and deposition of fibrin in the avian air sacs. It can act both as an adhesin and as a serine protease. Agglutinates erythrocytes while in contact with the extracellular surface of the bacterial cells. Can adhere to purified hemoglobin and bind with great efficiency to extracellular matrix proteins. Cleaves casein and exhibits mucinolytic activity. This Escherichia coli protein is Temperature-sensitive hemagglutinin tsh autotransporter (tsh).